A 62-amino-acid polypeptide reads, in one-letter code: Photosystem II reaction center protein Z (62 aa).

Helical transmembrane passes span alanine 8–alanine 28 and phenylalanine 41–isoleucine 61.

It belongs to the PsbZ family. In terms of assembly, PSII is composed of 1 copy each of membrane proteins PsbA, PsbB, PsbC, PsbD, PsbE, PsbF, PsbH, PsbI, PsbJ, PsbK, PsbL, PsbM, PsbT, PsbY, PsbZ, Psb30/Ycf12, at least 3 peripheral proteins of the oxygen-evolving complex and a large number of cofactors. It forms dimeric complexes.

Its subcellular location is the plastid. It is found in the chloroplast thylakoid membrane. Its function is as follows. May control the interaction of photosystem II (PSII) cores with the light-harvesting antenna, regulates electron flow through the 2 photosystem reaction centers. PSII is a light-driven water plastoquinone oxidoreductase, using light energy to abstract electrons from H(2)O, generating a proton gradient subsequently used for ATP formation. The chain is Photosystem II reaction center protein Z from Marchantia polymorpha (Common liverwort).